A 281-amino-acid chain; its full sequence is Undecaprenyl-diphosphatase (281 aa).

A run of 8 helical transmembrane segments spans residues 1–21, 45–65, 93–113, 125–145, 155–175, 195–215, 227–247, and 256–276; these read MNVL…FLPI, WTAF…IYFA, SKLG…GLVF, LIVI…SEVV, ISWL…VPGA, AARF…LLEF, FLVL…TIAF, and STNV…WMVF.

It belongs to the UppP family.

The protein resides in the cell inner membrane. It carries out the reaction di-trans,octa-cis-undecaprenyl diphosphate + H2O = di-trans,octa-cis-undecaprenyl phosphate + phosphate + H(+). Functionally, catalyzes the dephosphorylation of undecaprenyl diphosphate (UPP). Confers resistance to bacitracin. This is Undecaprenyl-diphosphatase from Syntrophobacter fumaroxidans (strain DSM 10017 / MPOB).